The following is a 93-amino-acid chain: Protein LSO1 (93 aa).

A disordered region spans residues 1–73 (MHNTGKRYSE…TEKLRAKKER (73 aa)). Positions 20–83 (ARKRRQAYEK…DQLLAAEEEA (64 aa)) form a coiled coil. Basic and acidic residues-rich tracts occupy residues 25 to 49 (QAYE…EEGA) and 57 to 73 (LIME…KKER).

It is found in the nucleus. The protein localises to the cytoplasm. Likely to play a role in iron homeostasis. This chain is Protein LSO1, found in Saccharomyces cerevisiae (strain ATCC 204508 / S288c) (Baker's yeast).